Here is a 410-residue protein sequence, read N- to C-terminus: Serine hydroxymethyltransferase (410 aa).

(6S)-5,6,7,8-tetrahydrofolate-binding positions include Leu119 and 123 to 125 (GHL). Position 228 is an N6-(pyridoxal phosphate)lysine (Lys228). A (6S)-5,6,7,8-tetrahydrofolate-binding site is contributed by 351–353 (SPF).

The protein belongs to the SHMT family. In terms of assembly, homodimer. It depends on pyridoxal 5'-phosphate as a cofactor.

The protein resides in the cytoplasm. It carries out the reaction (6R)-5,10-methylene-5,6,7,8-tetrahydrofolate + glycine + H2O = (6S)-5,6,7,8-tetrahydrofolate + L-serine. Its pathway is one-carbon metabolism; tetrahydrofolate interconversion. The protein operates within amino-acid biosynthesis; glycine biosynthesis; glycine from L-serine: step 1/1. In terms of biological role, catalyzes the reversible interconversion of serine and glycine with tetrahydrofolate (THF) serving as the one-carbon carrier. This reaction serves as the major source of one-carbon groups required for the biosynthesis of purines, thymidylate, methionine, and other important biomolecules. Also exhibits THF-independent aldolase activity toward beta-hydroxyamino acids, producing glycine and aldehydes, via a retro-aldol mechanism. In Clostridium perfringens (strain ATCC 13124 / DSM 756 / JCM 1290 / NCIMB 6125 / NCTC 8237 / Type A), this protein is Serine hydroxymethyltransferase.